Here is a 209-residue protein sequence, read N- to C-terminus: Response regulator protein VraR (209 aa).

Residues 4-120 enclose the Response regulatory domain; the sequence is KVLFVDDHEM…DIADAVRKTS (117 aa). At D55 the chain carries 4-aspartylphosphate. In terms of domain architecture, HTH luxR-type spans 141-206; that stretch reads RAELYEMLTE…QAVIYAFQHN (66 aa). Residues 165–184 constitute a DNA-binding region (H-T-H motif); that stretch reads NQEIASASHITIKTVKTHVS.

Homodimer. Post-translationally, phosphorylated by VraS. Phosphorylation state of VraR controls dimerization of the protein.

The protein resides in the cytoplasm. Its function is as follows. Member of the two-component regulatory system VraS/VraR involved in the control of the cell wall peptidoglycan biosynthesis. Upon cellular stress, the histidine kinase VraS transfers the phosphoryl group onto VraR. Upon phosphorylation, VraR dimerizes at the N-terminal domain. In turn, phosphorylation-induced dimerization expands and enhances the VraR binding to its own promoter leading to increased expression and subsequent modulation of as many as 40 genes, which ultimately constitute the S.aureus response to cell wall damage. In addition, inhibits the host autophagic flux and delays the early stage of autophagosome formation, thereby promoting bacterial survival. Facilitates the ability of S.aureus to resist host polymorphonuclear leukocytes-mediated phagocytosis and killing thus contributing to immune evasion. The chain is Response regulator protein VraR (vraR) from Staphylococcus aureus (strain Mu3 / ATCC 700698).